A 402-amino-acid polypeptide reads, in one-letter code: tRNA(Met) cytidine acetate ligase (402 aa).

ATP contacts are provided by residues 7-20 (IAEY…HIHH), Gly102, Asn171, and Arg196.

This sequence belongs to the TmcAL family.

The protein resides in the cytoplasm. The catalysed reaction is cytidine(34) in elongator tRNA(Met) + acetate + ATP = N(4)-acetylcytidine(34) in elongator tRNA(Met) + AMP + diphosphate. Its function is as follows. Catalyzes the formation of N(4)-acetylcytidine (ac(4)C) at the wobble position of elongator tRNA(Met), using acetate and ATP as substrates. First activates an acetate ion to form acetyladenylate (Ac-AMP) and then transfers the acetyl group to tRNA to form ac(4)C34. This is tRNA(Met) cytidine acetate ligase from Clostridium acetobutylicum (strain ATCC 824 / DSM 792 / JCM 1419 / IAM 19013 / LMG 5710 / NBRC 13948 / NRRL B-527 / VKM B-1787 / 2291 / W).